Consider the following 493-residue polypeptide: Glutamyl-tRNA(Gln) amidotransferase subunit A (493 aa).

Active-site charge relay system residues include Lys-78 and Ser-158. Ser-182 functions as the Acyl-ester intermediate in the catalytic mechanism.

This sequence belongs to the amidase family. GatA subfamily. As to quaternary structure, heterotrimer of A, B and C subunits.

It carries out the reaction L-glutamyl-tRNA(Gln) + L-glutamine + ATP + H2O = L-glutaminyl-tRNA(Gln) + L-glutamate + ADP + phosphate + H(+). Functionally, allows the formation of correctly charged Gln-tRNA(Gln) through the transamidation of misacylated Glu-tRNA(Gln) in organisms which lack glutaminyl-tRNA synthetase. The reaction takes place in the presence of glutamine and ATP through an activated gamma-phospho-Glu-tRNA(Gln). The protein is Glutamyl-tRNA(Gln) amidotransferase subunit A of Rickettsia bellii (strain RML369-C).